The following is a 1043-amino-acid chain: Protein SLOW WALKER 2 (1043 aa).

Disordered stretches follow at residues 32 to 113 (SALP…SIDD), 444 to 469 (QGADDKGAADKKKSNPKDTKQEVSTD), 632 to 737 (DIEH…GGYD), and 861 to 1043 (SKKK…KASE). A Nuclear localization signal 1 motif is present at residues 44 to 51 (FRKPAKSK). The span at 47-59 (PAKSKTQKRKKPK) shows a compositional bias: basic residues. Composition is skewed to basic and acidic residues over residues 80–95 (EKGKDFGARKQNKDAP) and 444–466 (QGADDKGAADKKKSNPKDTKQEV). The Nuclear localization signal 2 signature appears at 441-448 (NRKQGADD). Acidic residues predominate over residues 632–645 (DIEHFEDVIEGDDV). Residues 646-673 (DPNKKAENDENVVEVDHDGVEKSSRDGD) show a composition bias toward basic and acidic residues. Composition is skewed to acidic residues over residues 688–699 (DEEDDNASDDSE) and 872–983 (EEAA…DSDG). Basic residues predominate over residues 988-1000 (SKKKKKEKRKRKS). The span at 1006-1031 (EEYKHLIDQDEKEDSKTKRKATSEPT) shows a compositional bias: basic and acidic residues. The Nuclear localization signal 3 motif lies at 1022-1029 (TKRKATSE). The segment covering 1032–1043 (KKKKKKKSKASE) has biased composition (basic residues).

Belongs to the CBF/MAK21 family. Interacts with RBL in both the nucleolus and nucleoplasm. Binds to NOC2. In terms of tissue distribution, mainly expressed in actively dividing tissues (e.g. root tips, lateral root primordia, shoot apices, young leaves, inflorescences and pollen grains) through the plant, including roots, stems, leaves, inflorescences, siliques and seedlings, and in gametophytes.

Its subcellular location is the nucleus. It is found in the nucleolus. Functionally, together with NOC2, probably involved in pre-ribosome export from the nucleus to the cytoplasm. Required for coordinated cell cycle progression during female gametophyte and pollen development. The chain is Protein SLOW WALKER 2 from Arabidopsis thaliana (Mouse-ear cress).